We begin with the raw amino-acid sequence, 375 residues long: DnaJ homolog subfamily B member 12 (375 aa).

Met-1 bears the N-acetylmethionine mark. At 1–243 (MESNKDEAER…DRRDNQGDGG (243 aa)) the chain is on the cytoplasmic side. A disordered region spans residues 45–92 (ALIESLNQKPQTAGDQPPPTDTTHATHRKAGGTDAPSANGEAGGESTK). A compositionally biased stretch (polar residues) spans 49–58 (SLNQKPQTAG). One can recognise a J domain in the interval 112–176 (YEILGVSRGA…RKQYDQFGDD (65 aa)). His-185 carries the post-translational modification Pros-methylhistidine. Residues 244–264 (LGVFVQLMPILILILVSALSQ) form a helical membrane-spanning segment. Residues 265–375 (LMVSSPPYSL…LSEVQASLHG (111 aa)) are Lumenal-facing.

The protein belongs to the DnaJ family. DNAJB12/DNAJB14 subfamily. As to quaternary structure, homodimer and homotetramer. Interacts (via J domain) with HSPA8/Hsc70. Forms a multiprotein complex, at least composed of DNAJB12, DNAJB14, HSPA8/Hsc70 and SGTA; interaction with DNAJB14 and HSPA8/Hsc70 is direct. Post-translationally, methylated at His-185 by METTL9.

Its subcellular location is the endoplasmic reticulum membrane. The protein resides in the nucleus membrane. Functionally, acts as a co-chaperone with HSPA8/Hsc70; required to promote protein folding and trafficking, prevent aggregation of client proteins, and promote unfolded proteins to endoplasmic reticulum-associated degradation (ERAD) pathway. Acts by determining HSPA8/Hsc70's ATPase and polypeptide-binding activities. Can also act independently of HSPA8/Hsc70: together with DNAJB14, acts as a chaperone that promotes maturation of potassium channels KCND2 and KCNH2 by stabilizing nascent channel subunits and assembling them into tetramers. While stabilization of nascent channel proteins is dependent on HSPA8/Hsc70, the process of oligomerization of channel subunits is independent of HSPA8/Hsc70. When overexpressed, forms membranous structures together with DNAJB14 and HSPA8/Hsc70 within the nucleus; the role of these structures, named DJANGOs, is still unclear. In terms of biological role, (Microbial infection) In case of infection by polyomavirus, involved in the virus endoplasmic reticulum membrane penetration and infection. This is DnaJ homolog subfamily B member 12 from Homo sapiens (Human).